The sequence spans 164 residues: UPF0114 protein BCI_0033 (164 aa).

The next 3 membrane-spanning stretches (helical) occupy residues 15 to 35 (LLFPVYIGLSFGFILLTLKFF), 53 to 73 (LILIVLSMIDIALVGGLLVMV), and 136 to 156 (IMWCVIIHLAFVLSAFGMAYI).

It belongs to the UPF0114 family.

The protein localises to the cell membrane. The polypeptide is UPF0114 protein BCI_0033 (Baumannia cicadellinicola subsp. Homalodisca coagulata).